A 275-amino-acid polypeptide reads, in one-letter code: Replication protein A 32 kDa subunit (275 aa).

Residues 23–47 (MQSPGGFGSPAPTQGEKKSRSRSQQ) form a disordered region. Positions 76-150 (VTIVGIVRHA…KSVVAFKIAP (75 aa)) form a DNA-binding region, OB.

The protein belongs to the replication factor A protein 2 family. Component of the replication protein A complex (RPA/RP-A), a heterotrimeric complex composed of RPA1, RPA2 and RPA3. Differentially phosphorylated throughout the cell cycle, becoming phosphorylated at the G1-S transition and dephosphorylated in late mitosis. Phosphorylation increases upon replication fork stalling.

Its subcellular location is the nucleus. The protein resides in the PML body. As part of the heterotrimeric replication protein A complex (RPA/RP-A), binds and stabilizes single-stranded DNA intermediates, that form during DNA replication or upon DNA stress. It prevents their reannealing and in parallel, recruits and activates different proteins and complexes involved in DNA metabolism. Thereby, it plays an essential role both in DNA replication and the cellular response to DNA damage. This Xenopus tropicalis (Western clawed frog) protein is Replication protein A 32 kDa subunit (rpa2).